Here is a 178-residue protein sequence, read N- to C-terminus: Ribosome maturation factor RimM (178 aa).

The PRC barrel domain occupies 100–178 (AADEYYWYQL…VMRVEWDADF (79 aa)).

Belongs to the RimM family. As to quaternary structure, binds ribosomal protein uS19.

The protein resides in the cytoplasm. An accessory protein needed during the final step in the assembly of 30S ribosomal subunit, possibly for assembly of the head region. Essential for efficient processing of 16S rRNA. May be needed both before and after RbfA during the maturation of 16S rRNA. It has affinity for free ribosomal 30S subunits but not for 70S ribosomes. This Pseudomonas putida (strain W619) protein is Ribosome maturation factor RimM.